Here is a 71-residue protein sequence, read N- to C-terminus: UPF0346 protein SP70585_0986 (71 aa).

This sequence belongs to the UPF0346 family.

This chain is UPF0346 protein SP70585_0986, found in Streptococcus pneumoniae (strain 70585).